A 500-amino-acid polypeptide reads, in one-letter code: Signal transduction histidine-protein kinase/phosphatase UhpB (500 aa).

Transmembrane regions (helical) follow at residues 8 to 28 (LITV…LWSI), 78 to 98 (VALA…LPVA), 112 to 132 (LLLQ…PWLG), 140 to 160 (ALLL…VFWH), 185 to 205 (HLIW…GLPA), 207 to 224 (LSRF…ALAW), 231 to 249 (ALIA…QTWH), and 253 to 273 (VDLL…GAGI). The Cytoplasmic portion of the chain corresponds to 274–500 (QRLRELNQSL…VSVSLPQRYV (227 aa)). The region spanning 311-499 (ELHDDIGQTI…RVSVSLPQRY (189 aa)) is the Histidine kinase domain. Residue His313 is modified to Phosphohistidine; by autocatalysis.

Post-translationally, autophosphorylated.

It is found in the cell inner membrane. It carries out the reaction ATP + protein L-histidine = ADP + protein N-phospho-L-histidine.. Functionally, part of the UhpABC signaling cascade that controls the expression of the hexose phosphate transporter UhpT. UhpB functions as a membrane-associated protein kinase that autophosphorylates in response to interaction with UhpC, and subsequently transfers its phosphate group to the response regulator UhpA. Can also dephosphorylate UhpA. This chain is Signal transduction histidine-protein kinase/phosphatase UhpB (uhpB), found in Salmonella typhimurium (strain LT2 / SGSC1412 / ATCC 700720).